A 189-amino-acid polypeptide reads, in one-letter code: CASP-like protein 1F2 (189 aa).

The Cytoplasmic segment spans residues 1–27 (MESLEVANGKSSALGVSREASSPPQMG). Residues 28-48 (FFIAQVVLRFFTLAFTGAAIA) form a helical membrane-spanning segment. Topologically, residues 49–77 (VMVTAKETVEVFSISFTVRYSYLSAFKFL) are extracellular. Residues 78-98 (VGADAVVCGFSMLSLIFVSIF) form a helical membrane-spanning segment. Topologically, residues 99 to 113 (NKGKSNHYFFLYFHD) are cytoplasmic. Residues 114–134 (LILMVLSMSACAAATAVGYVG) form a helical membrane-spanning segment. The Extracellular segment spans residues 135 to 156 (RYGQDKAAWMAVCGNVKMFCDK). A helical transmembrane segment spans residues 157-177 (ALASILLSLIGFICLFLLTIM). Residues 178–189 (AARNLRVSGHLI) lie on the Cytoplasmic side of the membrane.

It belongs to the Casparian strip membrane proteins (CASP) family. In terms of assembly, homodimer and heterodimers.

The protein localises to the cell membrane. The polypeptide is CASP-like protein 1F2 (Vitis vinifera (Grape)).